We begin with the raw amino-acid sequence, 288 residues long: Xyloglucan endotransglucosylase protein 8 (288 aa).

Positions 1 to 25 are cleaved as a signal peptide; it reads MAASPYSIFAVQLLLLASWMLSSSS. Residues 26 to 215 enclose the GH16 domain; sequence SNFNQDFNIA…WTQAPFTTSY (190 aa). Catalysis depends on Glu-102, which acts as the Nucleophile. The active-site Proton donor is Glu-106. Glu-106 contributes to the xyloglucan binding site. Residue Asn-110 is glycosylated (N-linked (GlcNAc...) asparagine). Xyloglucan-binding positions include 119–121, 129–131, 194–195, and Gly-199; these read HTN, ERE, and EW. Intrachain disulfides connect Cys-224-Cys-233 and Cys-268-Cys-282. Arg-273 serves as a coordination point for xyloglucan.

This sequence belongs to the glycosyl hydrolase 16 family. XTH group 2 subfamily. In terms of processing, contains at least one intrachain disulfide bond essential for its enzymatic activity. Highly expressed in mature fruits. Very low expression in leaves, flowers, calyces and stems.

It localises to the secreted. It is found in the cell wall. The protein resides in the extracellular space. The protein localises to the apoplast. The catalysed reaction is breaks a beta-(1-&gt;4) bond in the backbone of a xyloglucan and transfers the xyloglucanyl segment on to O-4 of the non-reducing terminal glucose residue of an acceptor, which can be a xyloglucan or an oligosaccharide of xyloglucan.. Its function is as follows. Catalyzes xyloglucan endotransglycosylation (XET). Cleaves and religates xyloglucan polymers. Does not catalyze xyloglucan endohydrolysis (XEH). Overexpression in Arabidopsis transgenic plants causes accelerated dark-induced leaf senescence and higher lipid peroxidation of the leaf cells. Overexpression in transgenic tomato plants promotes fruit ripening and softening. Probably involved in cell wall restructuring during postharvest fruit softening. In Diospyros kaki (Kaki persimmon), this protein is Xyloglucan endotransglucosylase protein 8.